The following is a 198-amino-acid chain: MDSLLMKQRKFLYHFKNVRWAKGRHETYLCYVVKRRDSATSFSLDFGHLRNKSGCHVELLFLRYISDWDLDPGRCYRVTWFTSWSPCYDCARHVADFLRGYPNLSLRIFAARLYFCEDRKAEPEGLRRLHRAGVQIAIMTFKDYFYCWNTFVENREKTFKAWEGLHENSVRLSRQLRRILLPLYEVDDLRDAFRTLGL.

The Bipartite nuclear localization signal signature appears at 1-30 (MDSLLMKQRKFLYHFKNVRWAKGRHETYLC). Positions 2–26 (DSLLMKQRKFLYHFKNVRWAKGRHE) are interaction with SUPT6H. The CMP/dCMP-type deaminase domain maps to 23–129 (GRHETYLCYV…KAEPEGLRRL (107 aa)). Residue threonine 27 is modified to Phosphothreonine; by PKA. Position 38 is a phosphoserine; by PKA (serine 38). The tract at residues 39-42 (ATSF) is important for interaction with CTNNBL1. Histidine 56 is a Zn(2+) binding site. Residue glutamate 58 is the Proton donor of the active site. 2 residues coordinate Zn(2+): cysteine 87 and cysteine 90. The tract at residues 88–116 (YDCARHVADFLRGYPNLSLRIFAARLYFC) is required for interaction with RNF126. The short motif at 183–198 (LYEVDDLRDAFRTLGL) is the Nuclear export signal element.

Belongs to the cytidine and deoxycytidylate deaminase family. As to quaternary structure, interacts with CTNNBL1; the interaction is important for the immunoglobulin switch activity of AICDA. Interacts (via its NLS) with KPNA1. Interacts with PKA/PRKACA and PRKAR1A/PKR1. Interacts with SUPT6H, TRIM28 and NCL. Directly interacts with MCM3AP; this interaction may favor AICDA recruitment to immunoglobulin variable region genes, hence promoting somatic hypermutations. Requires Zn(2+) as cofactor. Post-translationally, ser-38 is the major site whereas Thr-27 is the minor site of phosphorylation. Phosphorylation regulates its class-switch recombination activity. In terms of processing, probably monoubiquitinated on several residues by RNF126. As to expression, expressed in thymus, lung, spleen, kidney, small intestine, lymph node and tonsil.

The protein resides in the nucleus. Its subcellular location is the cytoplasm. It carries out the reaction a 2'-deoxycytidine in single-stranded DNA + H2O + H(+) = a 2'-deoxyuridine in single-stranded DNA + NH4(+). Its function is as follows. Single-stranded DNA-specific cytidine deaminase. Involved in somatic hypermutation (SHM), gene conversion, and class-switch recombination (CSR) in B-lymphocytes by deaminating C to U during transcription of Ig-variable (V) and Ig-switch (S) region DNA. Required for several crucial steps of B-cell terminal differentiation necessary for efficient antibody responses. May also play a role in the epigenetic regulation of gene expression by participating in DNA demethylation. The sequence is that of Single-stranded DNA cytosine deaminase (AICDA) from Canis lupus familiaris (Dog).